A 188-amino-acid chain; its full sequence is Protein GrpE 2 (188 aa).

Residues 1-29 are compositionally biased toward basic and acidic residues; it reads MDNQEKKTNYQNTDKENDLEKNKEKKNDE. The segment at 1–33 is disordered; sequence MDNQEKKTNYQNTDKENDLEKNKEKKNDESIFQ.

This sequence belongs to the GrpE family. In terms of assembly, homodimer.

It localises to the cytoplasm. Participates actively in the response to hyperosmotic and heat shock by preventing the aggregation of stress-denatured proteins, in association with DnaK and GrpE. It is the nucleotide exchange factor for DnaK and may function as a thermosensor. Unfolded proteins bind initially to DnaJ; upon interaction with the DnaJ-bound protein, DnaK hydrolyzes its bound ATP, resulting in the formation of a stable complex. GrpE releases ADP from DnaK; ATP binding to DnaK triggers the release of the substrate protein, thus completing the reaction cycle. Several rounds of ATP-dependent interactions between DnaJ, DnaK and GrpE are required for fully efficient folding. The sequence is that of Protein GrpE 2 from Buchnera aphidicola subsp. Schizaphis graminum (strain Sg).